The sequence spans 342 residues: Anthranilate phosphoribosyltransferase (342 aa).

Residues G79, 82-83 (GD), T87, 89-92 (NIST), 107-115 (KHCNQRISS), and S119 each bind 5-phospho-alpha-D-ribose 1-diphosphate. G79 lines the anthranilate pocket. S91 is a binding site for Mg(2+). N110 is a binding site for anthranilate. R165 contacts anthranilate. Mg(2+) is bound by residues D223 and E224.

The protein belongs to the anthranilate phosphoribosyltransferase family. As to quaternary structure, homodimer. Mg(2+) serves as cofactor.

It carries out the reaction N-(5-phospho-beta-D-ribosyl)anthranilate + diphosphate = 5-phospho-alpha-D-ribose 1-diphosphate + anthranilate. It functions in the pathway amino-acid biosynthesis; L-tryptophan biosynthesis; L-tryptophan from chorismate: step 2/5. Catalyzes the transfer of the phosphoribosyl group of 5-phosphorylribose-1-pyrophosphate (PRPP) to anthranilate to yield N-(5'-phosphoribosyl)-anthranilate (PRA). The sequence is that of Anthranilate phosphoribosyltransferase from Buchnera aphidicola subsp. Acyrthosiphon pisum (strain Tuc7).